Reading from the N-terminus, the 218-residue chain is Pyridoxine/pyridoxamine 5'-phosphate oxidase (218 aa).

Substrate contacts are provided by residues 14–17 (RREY) and Lys-72. FMN-binding positions include 67–72 (RIVLLK), 82–83 (YT), Arg-88, Lys-89, and Gln-111. Tyr-129, Arg-133, and Ser-137 together coordinate substrate. FMN-binding positions include 146–147 (QS) and Trp-191. Residue 197–199 (RLH) coordinates substrate. Arg-201 contributes to the FMN binding site.

Belongs to the pyridoxamine 5'-phosphate oxidase family. In terms of assembly, homodimer. FMN is required as a cofactor.

The catalysed reaction is pyridoxamine 5'-phosphate + O2 + H2O = pyridoxal 5'-phosphate + H2O2 + NH4(+). It carries out the reaction pyridoxine 5'-phosphate + O2 = pyridoxal 5'-phosphate + H2O2. It functions in the pathway cofactor metabolism; pyridoxal 5'-phosphate salvage; pyridoxal 5'-phosphate from pyridoxamine 5'-phosphate: step 1/1. The protein operates within cofactor metabolism; pyridoxal 5'-phosphate salvage; pyridoxal 5'-phosphate from pyridoxine 5'-phosphate: step 1/1. Its function is as follows. Catalyzes the oxidation of either pyridoxine 5'-phosphate (PNP) or pyridoxamine 5'-phosphate (PMP) into pyridoxal 5'-phosphate (PLP). This Escherichia coli O45:K1 (strain S88 / ExPEC) protein is Pyridoxine/pyridoxamine 5'-phosphate oxidase.